We begin with the raw amino-acid sequence, 595 residues long: MNATARQEPADLNDPALRARAVTAARGDAPFDMLITGGRLLDTVTGLIRQADIGLVGALISSVHAPASRTDAVEIIDAAGSILTPGLIDTHMHIESSMVTPAEYASAVLPRGVTTIVWDPHEFGNVHGLDGVRWAIEAARSLPLRMILLAPSCVPSAPGLELAGADFDASMITEMLHSSAVGGVAEVMNMRGVIDGDPRMTDIVNAGLAAGKLVCGHARGLEGADLNAFMASGITSDHELTSGADLLAKLSAGLTIELRGSHDHLLQEFVEVLSGLGHLPPTVTLCTDDVFPDELQEGGGLDDVVRRLVRYGMKPEWAIRAATFNAAQRLKRSDLGLVATGRRADIVLFEDLTEFRARLVISGGRIVARNGSMQVAVQQIDTAPLVNSVKLPPLTENDFRIPAKGERVRVATIDRPRFTQWGEAETEVRDGFIVPPAGSAMISVAHRHGKTDGIPRIGFLTGWGEWRGAFCTTVSHDSHNLTVFGGNAGDMALAANAVISAGGGMAVAKDGRIEAMLPLPLSGLVTDASLKDTALAFAGIRKAMEKIVTWKPPYLVFKACFGATLACNVGPHQTDQGIADVVTGKVLENPVLAVW.

The protein belongs to the metallo-dependent hydrolases superfamily. Adenine deaminase family. It depends on Mn(2+) as a cofactor.

It catalyses the reaction adenine + H2O + H(+) = hypoxanthine + NH4(+). The polypeptide is Adenine deaminase 2 (Rhizobium johnstonii (strain DSM 114642 / LMG 32736 / 3841) (Rhizobium leguminosarum bv. viciae)).